The following is a 255-amino-acid chain: MLDAPAGRWPDPDAGEGALRRLLDGEGKDLVIDRALLRWAAERGKGPYPRAERTARWRALIETALGWTAPTFPLGGRDALACGLKGPAVGEAWRPCADAGLRAAARPGGTRCWPGSPLGGTGPPTNRPPRSRAWNRYRSDRPSPGGVLRPACGMAQGLAEHQGGGDGDVERAHAGNHRNPDAQVGALVDLGGNARALSAQQQHVVGLKVSFGMKRARLRCQQDQAGFVGEPRDEIRPGRMTHKSGAFEIVHSGAA.

2 disordered regions span residues 112-145 (CWPG…PSPG) and 157-183 (GLAE…PDAQ).

This is an uncharacterized protein from Rhodospirillum rubrum.